Here is a 2559-residue protein sequence, read N- to C-terminus: Stabilin-2 (2559 aa).

The N-terminal stretch at 1–28 (MARSKLLLGKLLPLILIFLGLLVQNACS) is a signal peptide. The Extracellular portion of the chain corresponds to 29 to 2464 (PTEAPELTKR…PPTAATAAHS (2436 aa)). N-linked (GlcNAc...) asparagine glycosylation occurs at asparagine 71. 5 consecutive EGF-like domains span residues 116–156 (DCME…TACE), 164–201 (FGPN…PRCD), 203–244 (PIPE…QTCK), 245–284 (PINP…QVCL), and 330–370 (MTDI…LNCY). Cystine bridges form between cysteine 120/cysteine 134, cysteine 128/cysteine 144, and cysteine 146/cysteine 155. Asparagine 167 is a glycosylation site (N-linked (GlcNAc...) asparagine). 12 disulfide bridges follow: cysteine 168-cysteine 179, cysteine 172-cysteine 189, cysteine 191-cysteine 200, cysteine 207-cysteine 218, cysteine 212-cysteine 230, cysteine 232-cysteine 243, cysteine 249-cysteine 260, cysteine 254-cysteine 270, cysteine 272-cysteine 283, cysteine 334-cysteine 346, cysteine 340-cysteine 356, and cysteine 358-cysteine 369. Asparagine 345 is a glycosylation site (N-linked (GlcNAc...) asparagine). FAS1 domains are found at residues 379–512 (ELNT…DRAM) and 522–659 (NPQQ…TGVL). 4 N-linked (GlcNAc...) asparagine glycosylation sites follow: asparagine 572, asparagine 626, asparagine 673, and asparagine 691. One can recognise an EGF-like 6 domain in the interval 743 to 783 (DCNPCPGGFMNPCSGNGQCIDGLGGNGTCICEDGFQGSRCQ). 3 disulfide bridges follow: cysteine 747–cysteine 761, cysteine 755–cysteine 771, and cysteine 773–cysteine 782. Asparagine 768 carries an N-linked (GlcNAc...) asparagine glycan. N-linked (GlcNAc...) asparagine glycosylation occurs at asparagine 796. 4 EGF-like domains span residues 833–873 (QTSA…TLCS), 874–917 (KKDP…RDCV), 918–960 (EINS…IDCE), and 961–1002 (PIIS…VLCY). 12 cysteine pairs are disulfide-bonded: cysteine 837/cysteine 850, cysteine 844/cysteine 859, cysteine 861/cysteine 872, cysteine 878/cysteine 893, cysteine 887/cysteine 903, cysteine 905/cysteine 916, cysteine 922/cysteine 936, cysteine 930/cysteine 946, cysteine 948/cysteine 959, cysteine 965/cysteine 978, cysteine 972/cysteine 988, and cysteine 990/cysteine 1001. N-linked (GlcNAc...) asparagine glycosylation occurs at asparagine 854. The N-linked (GlcNAc...) asparagine glycan is linked to asparagine 933. 2 consecutive FAS1 domains span residues 1002–1135 (YGNV…NKVL) and 1145–1273 (LPSL…EKVL). Residues asparagine 1024, asparagine 1036, asparagine 1108, asparagine 1255, and asparagine 1283 are each glycosylated (N-linked (GlcNAc...) asparagine). Positions 1350–1415 (PQCQACPGKG…CSCVHGRCNQ (66 aa)) constitute a Laminin EGF-like 1 domain. Disulfide bonds link cysteine 1355/cysteine 1369, cysteine 1363/cysteine 1379, cysteine 1381/cysteine 1390, cysteine 1402/cysteine 1413, cysteine 1406/cysteine 1423, cysteine 1425/cysteine 1434, cysteine 1443/cysteine 1453, cysteine 1447/cysteine 1463, cysteine 1465/cysteine 1476, cysteine 1482/cysteine 1495, cysteine 1489/cysteine 1505, cysteine 1507/cysteine 1518, cysteine 1524/cysteine 1537, cysteine 1531/cysteine 1547, cysteine 1549/cysteine 1560, cysteine 1566/cysteine 1579, cysteine 1573/cysteine 1589, and cysteine 1591/cysteine 1602. Residues asparagine 1374 and asparagine 1386 are each glycosylated (N-linked (GlcNAc...) asparagine). 4 EGF-like domains span residues 1439–1477 (TTDN…TVCT), 1478–1519 (AINA…IVCL), 1520–1561 (EINP…KVCT), and 1562–1603 (LINV…IVCR). A glycan (N-linked (GlcNAc...) asparagine) is linked at asparagine 1444. Asparagine 1472 carries N-linked (GlcNAc...) asparagine glycosylation. N-linked (GlcNAc...) asparagine glycosylation occurs at asparagine 1580. 2 consecutive FAS1 domains span residues 1603 to 1731 (RGSI…DTLL) and 1747 to 1888 (VLLN…DCLL). Asparagine 1750 is a glycosylation site (N-linked (GlcNAc...) asparagine). The 66-residue stretch at 1965–2030 (PDCQACPGGP…GCSEHGQCDE (66 aa)) folds into the Laminin EGF-like 2 domain. 17 cysteine pairs are disulfide-bonded: cysteine 1970–cysteine 1984, cysteine 1978–cysteine 1994, cysteine 1996–cysteine 2005, cysteine 2017–cysteine 2028, cysteine 2022–cysteine 2038, cysteine 2040–cysteine 2049, cysteine 2059–cysteine 2069, cysteine 2063–cysteine 2075, cysteine 2077–cysteine 2088, cysteine 2094–cysteine 2107, cysteine 2101–cysteine 2116, cysteine 2118–cysteine 2129, cysteine 2135–cysteine 2149, cysteine 2143–cysteine 2159, cysteine 2161–cysteine 2172, cysteine 2228–cysteine 2296, and cysteine 2252–cysteine 2273. Residue asparagine 2001 is glycosylated (N-linked (GlcNAc...) asparagine). 3 consecutive EGF-like domains span residues 2055-2089 (VIPV…ITCT), 2090-2130 (VVDF…HSCT), and 2131-2173 (EIDP…RDCE). Asparagine 2072 carries an N-linked (GlcNAc...) asparagine glycan. A Link domain is found at 2206–2298 (GVFHLRSPLG…SEMWDVFCYR (93 aa)). 5 N-linked (GlcNAc...) asparagine glycosylation sites follow: asparagine 2287, asparagine 2303, asparagine 2375, asparagine 2391, and asparagine 2400. In terms of domain architecture, FAS1 7 spans 2318–2452 (NGNLLQVLMS…GVLHIISEPL (135 aa)). The chain crosses the membrane as a helical span at residues 2465–2485 (GLGTGIFCAVVLVTGAIALAA). At 2486–2559 (YSYFRLNQRT…NSDPLGALRS (74 aa)) the chain is on the cytoplasmic side. Position 2503 is a phosphoserine (serine 2503). Positions 2510–2520 (LAFGKQQPESI) are interaction with TMSB4X. Residues 2514–2559 (KQQPESITNPLYETSTPAAPEPSCDPFTDSGERELENSDPLGALRS) are disordered. Polar residues predominate over residues 2516–2530 (QPESITNPLYETSTP).

As to quaternary structure, interacts with heparin, alpha-M/beta-2 integrin (ITGAM and ITGB2), and thymosin beta 4 (TMSB4X). Interacts with GULP1. Associates with clathrin and adapter protein AP-2; in liver sinusoidal endothelial cells (LSECs). Glycosylated. In terms of processing, proteolytically processed to yield a smaller protein. As to expression, expressed in endothelial sinuses of liver, lymph nodes, bone marrow, spleen and in specialised structures of eye, heart, brain and kidney. Expression is detected in corneal and lens epithelium, in mesenchymal cells of the heart valves, in the ependymal cells lining the ventricles in the brain, and in the prismatic epithelial cells covering the renal papillae.

The protein resides in the cytoplasm. It localises to the cell membrane. Functionally, phosphatidylserine receptor that enhances the engulfment of apoptotic cells. Hyaluronan receptor that binds to and mediates endocytosis of hyaluronic acid (HA). Also acts, in different species, as a primary systemic scavenger receptor for heparin (Hep), chondroitin sulfate (CS), dermatan sulfate (DS), nonglycosaminoglycan (GAG), acetylated low-density lipoprotein (AcLDL), pro-collagen propeptides and advanced glycation end products (AGE). May serve to maintain tissue integrity by supporting extracellular matrix turnover or it may contribute to maintaining fluidity of bodily liquids by resorption of hyaluronan. Counter receptor which plays an important role in lymphocyte recruitment in the hepatic vasculature. Binds to both Gram-positive and Gram-negative bacteria and may play a role in defense against bacterial infection. The proteolytically processed short form also functions as an endocytosis receptor for heparin internalization as well as HA and CS. In Mus musculus (Mouse), this protein is Stabilin-2.